A 106-amino-acid chain; its full sequence is BLOC-1-related complex subunit 7 (106 aa).

It belongs to the BORCS7 family. As to quaternary structure, component of the BLOC-one-related complex (BORC) which is composed of BLOC1S1, BLOC1S2, BORCS5, BORCS6, BORCS7, BORCS8, KXD1 and SNAPIN.

The protein localises to the lysosome membrane. Functionally, as part of the BORC complex may play a role in lysosomes movement and localization at the cell periphery. Associated with the cytosolic face of lysosomes, the BORC complex may recruit ARL8B and couple lysosomes to microtubule plus-end-directed kinesin motor. This Pongo abelii (Sumatran orangutan) protein is BLOC-1-related complex subunit 7.